Consider the following 1044-residue polypeptide: Eukaryotic translation initiation factor 3 subunit A (1044 aa).

Positions 92-121 (LKKFIELAEKKVTEAQAKADEIQSSLESAA) form a coiled coil. The PCI domain occupies 339-523 (MTKAASFVLL…GVLTFDTDIF (185 aa)). Residues 611 to 907 (IDKKKEAATD…EARRAARKAG (297 aa)) are a coiled coil. Basic and acidic residues predominate over residues 797–901 (SEKRHEEFEK…QREEEAEARR (105 aa)). Residues 797 to 1044 (SEKRHEEFEK…WVPRWKQQQS (248 aa)) are disordered. 2 stretches are compositionally biased toward low complexity: residues 943–956 (KEAA…AAPA) and 1006–1017 (SSSSQPPSRTQT).

This sequence belongs to the eIF-3 subunit A family. Component of the eukaryotic translation initiation factor 3 (eIF-3) complex.

It localises to the cytoplasm. In terms of biological role, RNA-binding component of the eukaryotic translation initiation factor 3 (eIF-3) complex, which is involved in protein synthesis of a specialized repertoire of mRNAs and, together with other initiation factors, stimulates binding of mRNA and methionyl-tRNAi to the 40S ribosome. The eIF-3 complex specifically targets and initiates translation of a subset of mRNAs involved in cell proliferation. The sequence is that of Eukaryotic translation initiation factor 3 subunit A (tif32) from Aspergillus clavatus (strain ATCC 1007 / CBS 513.65 / DSM 816 / NCTC 3887 / NRRL 1 / QM 1276 / 107).